Here is a 73-residue protein sequence, read N- to C-terminus: Exodeoxyribonuclease 7 small subunit (73 aa).

The protein belongs to the XseB family. As to quaternary structure, heterooligomer composed of large and small subunits.

The protein localises to the cytoplasm. The enzyme catalyses Exonucleolytic cleavage in either 5'- to 3'- or 3'- to 5'-direction to yield nucleoside 5'-phosphates.. Functionally, bidirectionally degrades single-stranded DNA into large acid-insoluble oligonucleotides, which are then degraded further into small acid-soluble oligonucleotides. The chain is Exodeoxyribonuclease 7 small subunit from Clostridium novyi (strain NT).